The primary structure comprises 308 residues: 11-beta-hydroxysteroid dehydrogenase-like 2 (308 aa).

Residues 10–30 form a helical; Signal-anchor for type II membrane protein membrane-spanning segment; the sequence is FLLPPLTISFLVLFYPFYLFT. NADP(+) contacts are provided by residues 53 to 79 and aspartate 104; that span reads GASS…VARR. Serine 183 provides a ligand contact to substrate. The Proton acceptor role is filled by tyrosine 196. NADP(+) is bound by residues 196–200 and lysine 200; that span reads YSASK.

It belongs to the short-chain dehydrogenases/reductases (SDR) family.

The protein resides in the membrane. This is 11-beta-hydroxysteroid dehydrogenase-like 2 (HSD2) from Arabidopsis thaliana (Mouse-ear cress).